The chain runs to 1040 residues: Neprilysin-4 (1040 aa).

The segment at 1–27 (MSRHSQLKLAMPSVHGAPATAPGSPMN) is disordered. A required for maintaining muscle integrity region spans residues 1 to 45 (MSRHSQLKLAMPSVHGAPATAPGSPMNAKARSVKLGLGVNQRTGR). Topologically, residues 1–55 (MSRHSQLKLAMPSVHGAPATAPGSPMNAKARSVKLGLGVNQRTGRVQWCPGLTCC) are cytoplasmic. The helical; Signal-anchor for type II membrane protein transmembrane segment at 56 to 76 (KMLLLLPVVMLPLTLVLILIM) threads the bilayer. Over 77–1040 (RLDGMLAALQ…MNPQKKCSVW (964 aa)) the chain is Extracellular. In terms of domain architecture, Peptidase M13 spans 251–1040 (EEGTREGIRM…MNPQKKCSVW (790 aa)). Disulfide bonds link Cys277–Cys1025, Cys285–Cys985, Cys452–Cys700, and Cys909–Cys1037. N-linked (GlcNAc...) asparagine glycans are attached at residues Asn387, Asn593, Asn723, and Asn819. Residue His872 participates in Zn(2+) binding. Glu873 is a catalytic residue. Residue His876 coordinates Zn(2+). Asn916 is a glycosylation site (N-linked (GlcNAc...) asparagine). Position 934 (Glu934) interacts with Zn(2+). Residue Asp938 is the Proton donor of the active site. Asn969 carries an N-linked (GlcNAc...) asparagine glycan.

The protein belongs to the peptidase M13 family. In terms of assembly, interacts (via intracellular domain) with the putative carbohydrate kinase CG3534. Requires Zn(2+) as cofactor. Expressed in the gonads and testes of adults, and the adult and larval brain (at protein level). In embryos, expressed in the pericardial, muscle founder and glia cells (at protein level). In stage 12 embryos, expressed in specific dorsal muscle founder cells such as DA1 and DO2, and also in the certain pericardial progenitor cells where expression persists throughout embryogenesis. Expressed in the glia cells of the embryonic, larval and adult central nervous system. Expressed in the somatic muscles of larvae, pupae and adults. Isoform A: Detected in the male abdomen (at protein level). Isoform B: Not detected in the male or female abdomen (at protein level).

Its subcellular location is the cell membrane. It is found in the sarcoplasmic reticulum. The protein resides in the cytoplasm. The enzyme catalyses Preferential cleavage of polypeptides between hydrophobic residues, particularly with Phe or Tyr at P1'.. Its function is as follows. Metalloendoprotease which cleaves peptides at the amino side of hydrophobic residues - such as the hormones Akh and Dh31, and the neuropeptides Allatostatins (AST1, AST2, AST3 and AST4), Crz, Drosulfakinins (DSK-I and DSK-II), Lk, sNPF and the tachykinin peptides TK-1, TK-2, TK-4 and TK-5. Functions in female fertility, memory formation and may also act in regulating insulin signaling and food intake. Likely to be involved in controlling feeding behavior and the expression of insulin-like peptides by cleaving various regulatory peptides that include certain Drosulfakinins, Allatostatins and tachykinin peptides. Required in females for normal patterns of egg laying and hatching. Required in the dorsal paired medial neurons for the proper formation of long-term (LTM) and middle-term memories (MTM). Also required in the mushroom body neurons where it functions redundantly with neprilysins Nep2 and Nep3, in normal LTM formation. Functionally, cleaves angiotensin-1 and tachykinin neuropeptide substance P. Functions in maintaining muscle integrity, possibly independently of its endopeptidase activity. This is Neprilysin-4 from Drosophila melanogaster (Fruit fly).